The sequence spans 201 residues: Urease accessory protein UreG (201 aa).

12 to 19 (GPVGSGKT) provides a ligand contact to GTP.

It belongs to the SIMIBI class G3E GTPase family. UreG subfamily. Homodimer. UreD, UreF and UreG form a complex that acts as a GTP-hydrolysis-dependent molecular chaperone, activating the urease apoprotein by helping to assemble the nickel containing metallocenter of UreC. The UreE protein probably delivers the nickel.

Its subcellular location is the cytoplasm. In terms of biological role, facilitates the functional incorporation of the urease nickel metallocenter. This process requires GTP hydrolysis, probably effectuated by UreG. This is Urease accessory protein UreG from Dechloromonas aromatica (strain RCB).